The sequence spans 218 residues: Thiopurine S-methyltransferase (218 aa).

The S-adenosyl-L-methionine site is built by Trp-11, Leu-46, Glu-67, and Arg-122.

It belongs to the class I-like SAM-binding methyltransferase superfamily. TPMT family.

It is found in the cytoplasm. It carries out the reaction S-adenosyl-L-methionine + a thiopurine = S-adenosyl-L-homocysteine + a thiopurine S-methylether.. This chain is Thiopurine S-methyltransferase, found in Vibrio cholerae serotype O1 (strain ATCC 39315 / El Tor Inaba N16961).